Consider the following 473-residue polypeptide: ATP synthase subunit beta 2 (473 aa).

158-165 (GGAGVGKT) is a binding site for ATP.

It belongs to the ATPase alpha/beta chains family. F-type ATPases have 2 components, CF(1) - the catalytic core - and CF(0) - the membrane proton channel. CF(1) has five subunits: alpha(3), beta(3), gamma(1), delta(1), epsilon(1). CF(0) has three main subunits: a(1), b(2) and c(9-12). The alpha and beta chains form an alternating ring which encloses part of the gamma chain. CF(1) is attached to CF(0) by a central stalk formed by the gamma and epsilon chains, while a peripheral stalk is formed by the delta and b chains.

It localises to the cell membrane. It carries out the reaction ATP + H2O + 4 H(+)(in) = ADP + phosphate + 5 H(+)(out). In terms of biological role, produces ATP from ADP in the presence of a proton gradient across the membrane. The catalytic sites are hosted primarily by the beta subunits. The chain is ATP synthase subunit beta 2 from Listeria monocytogenes serotype 4b (strain F2365).